Reading from the N-terminus, the 334-residue chain is Phosphoribosylformylglycinamidine cyclo-ligase (334 aa).

This sequence belongs to the AIR synthase family.

It is found in the cytoplasm. It carries out the reaction 2-formamido-N(1)-(5-O-phospho-beta-D-ribosyl)acetamidine + ATP = 5-amino-1-(5-phospho-beta-D-ribosyl)imidazole + ADP + phosphate + H(+). The protein operates within purine metabolism; IMP biosynthesis via de novo pathway; 5-amino-1-(5-phospho-D-ribosyl)imidazole from N(2)-formyl-N(1)-(5-phospho-D-ribosyl)glycinamide: step 2/2. The chain is Phosphoribosylformylglycinamidine cyclo-ligase from Pyrococcus furiosus (strain ATCC 43587 / DSM 3638 / JCM 8422 / Vc1).